Consider the following 216-residue polypeptide: Elongation factor Ts (216 aa).

An involved in Mg(2+) ion dislocation from EF-Tu region spans residues 81–84 (TDFV).

The protein belongs to the EF-Ts family.

Its subcellular location is the cytoplasm. Associates with the EF-Tu.GDP complex and induces the exchange of GDP to GTP. It remains bound to the aminoacyl-tRNA.EF-Tu.GTP complex up to the GTP hydrolysis stage on the ribosome. In Citrifermentans bemidjiense (strain ATCC BAA-1014 / DSM 16622 / JCM 12645 / Bem) (Geobacter bemidjiensis), this protein is Elongation factor Ts.